We begin with the raw amino-acid sequence, 185 residues long: Ribosome-recycling factor (185 aa).

It belongs to the RRF family.

The protein localises to the cytoplasm. Its function is as follows. Responsible for the release of ribosomes from messenger RNA at the termination of protein biosynthesis. May increase the efficiency of translation by recycling ribosomes from one round of translation to another. This Pseudarthrobacter chlorophenolicus (strain ATCC 700700 / DSM 12829 / CIP 107037 / JCM 12360 / KCTC 9906 / NCIMB 13794 / A6) (Arthrobacter chlorophenolicus) protein is Ribosome-recycling factor.